We begin with the raw amino-acid sequence, 138 residues long: MERTLSIIKPDGVKKNLIGEVVKRFQDQGIHIAALKMMQLTQKQAQGFYAVHRERPFFNSLTEFMTSGPIVVMVLEGDDVIAKNRKLMGATNFKEAEEGTIRRDFATDIEKNVVHGSDAPETAAFEIGYFFNDMEIVG.

Positions 9, 57, 85, 91, 102, and 112 each coordinate ATP. The active-site Pros-phosphohistidine intermediate is the H115.

Belongs to the NDK family. As to quaternary structure, homotetramer. Mg(2+) is required as a cofactor.

Its subcellular location is the cytoplasm. The catalysed reaction is a 2'-deoxyribonucleoside 5'-diphosphate + ATP = a 2'-deoxyribonucleoside 5'-triphosphate + ADP. It carries out the reaction a ribonucleoside 5'-diphosphate + ATP = a ribonucleoside 5'-triphosphate + ADP. Functionally, major role in the synthesis of nucleoside triphosphates other than ATP. The ATP gamma phosphate is transferred to the NDP beta phosphate via a ping-pong mechanism, using a phosphorylated active-site intermediate. This chain is Nucleoside diphosphate kinase, found in Desulforapulum autotrophicum (strain ATCC 43914 / DSM 3382 / VKM B-1955 / HRM2) (Desulfobacterium autotrophicum).